The chain runs to 327 residues: Acetaldehyde dehydrogenase 5 (327 aa).

15-18 is an NAD(+) binding site; sequence SGNI. Residue Cys133 is the Acyl-thioester intermediate of the active site. NAD(+) is bound by residues 164 to 172 and Asn297; that span reads SAGPGTRAN.

It belongs to the acetaldehyde dehydrogenase family.

It carries out the reaction acetaldehyde + NAD(+) + CoA = acetyl-CoA + NADH + H(+). The sequence is that of Acetaldehyde dehydrogenase 5 from Rhodococcus jostii (strain RHA1).